The following is an 89-amino-acid chain: Large ribosomal subunit protein uL24 (89 aa).

The protein belongs to the universal ribosomal protein uL24 family. In terms of assembly, part of the 50S ribosomal subunit.

Its function is as follows. One of two assembly initiator proteins, it binds directly to the 5'-end of the 23S rRNA, where it nucleates assembly of the 50S subunit. In terms of biological role, one of the proteins that surrounds the polypeptide exit tunnel on the outside of the subunit. This is Large ribosomal subunit protein uL24 from Chlorobium chlorochromatii (strain CaD3).